The sequence spans 212 residues: Glycerol-3-phosphate acyltransferase (212 aa).

5 helical membrane passes run 3-23 (LILL…LWIG), 69-89 (LLPM…FFAI), 110-130 (AGIL…IFFF), 143-163 (VIAA…HFLL), and 165-185 (DYDF…IIRH).

It belongs to the PlsY family. As to quaternary structure, probably interacts with PlsX.

It localises to the cell membrane. It catalyses the reaction an acyl phosphate + sn-glycerol 3-phosphate = a 1-acyl-sn-glycero-3-phosphate + phosphate. It participates in lipid metabolism; phospholipid metabolism. Catalyzes the transfer of an acyl group from acyl-phosphate (acyl-PO(4)) to glycerol-3-phosphate (G3P) to form lysophosphatidic acid (LPA). This enzyme utilizes acyl-phosphate as fatty acyl donor, but not acyl-CoA or acyl-ACP. This chain is Glycerol-3-phosphate acyltransferase, found in Streptococcus mutans serotype c (strain ATCC 700610 / UA159).